The sequence spans 664 residues: MVQPELTQSVGYGIVVGLGLGFAALMIFVSWSLKKFNNENQTSEHFNTASHSVRTGLVASAVVSSWTWASTLLTSAQKTYQYGVSGAFWYASGACVQILLFTVLAIELKRKAPNAHTFLEVVRARCGPIAHGVFLVFAYITNILVMAMLLCGGSATISSVTGMNTVAVCFLLPVGVIIYTMFGGIKATFLTDYIHTVIILVILIMFSLATYSADKKIGSPGKLYDMLKEAGDAHPVAGNAQGSYLTMRSQEGAIFFIINLAGNFGTVFVDNGYWQKAIAANPASALPGYILGGLAWFAIPWLAATTMGLVALGLENKPYFPTYPNRMSDLEVSEGLVLPYAAIALMGRAGANATLLLVFMAVTSAASAELIAVSSIFTYDIYKQYVRPRATGKELLYTGHASLIVFGFAMSGFATGLYYGQVSMGYLYLLMGVLVCPAVVPATCVMLFSRVSTIAVTVSPVLGIISSIITWLVVARAEGGKTLTIETTGANNPMLAGNVVGLLSPALYILILSIIFPEKYDFNRLLATFAMHFSSEEDEIQQTKKLNRASVISKVAALIITAAFIILWPWPMYGTGYIFSKRFFTGWVVVGLIWIFFTVFAVGIFPLWEGRNDIYQVVSNMAASIFGRKVNDIVEDEGVVVETISIGSGSKEKVNFEKKDIESV.

16 consecutive transmembrane segments (helical) span residues 9 to 29, 56 to 76, 86 to 106, 132 to 152, 165 to 185, 189 to 209, 252 to 272, 290 to 310, 327 to 347, 353 to 373, 395 to 415, 428 to 448, 454 to 474, 496 to 516, 555 to 575, and 587 to 607; these read SVGY…MIFV, GLVA…LTSA, GAFW…VLAI, GVFL…LLCG, TVAV…FGGI, FLTD…FSLA, GAIF…VDNG, ILGG…MGLV, MSDL…ALMG, ATLL…LIAV, LLYT…GFAT, YLLM…VMLF, IAVT…WLVV, AGNV…SIIF, VAAL…MYGT, and WVVV…IFPL.

Belongs to the sodium:solute symporter (SSF) (TC 2.A.21) family.

Its subcellular location is the membrane. Functionally, involved in active transport of urea. The sequence is that of Probable urea active transporter 1 (dur3-1) from Schizosaccharomyces pombe (strain 972 / ATCC 24843) (Fission yeast).